Consider the following 95-residue polypeptide: Progonadoliberin-1 (95 aa).

The signal sequence occupies residues 1-25; sequence MAPQTSNLWILLLLVVVMMMSQGCC. Position 26 is a pyrrolidone carboxylic acid (glutamine 26). Position 35 is a glycine amide (glycine 35).

It belongs to the GnRH family.

The protein resides in the secreted. Stimulates the secretion of gonadotropins. The chain is Progonadoliberin-1 (gnrh1) from Sparus aurata (Gilthead sea bream).